Reading from the N-terminus, the 352-residue chain is Carbohydrate sulfotransferase 11 (352 aa).

Over 1–16 (MKPALLEVMRMNRICR) the chain is Cytoplasmic. A helical; Signal-anchor for type II membrane protein membrane pass occupies residues 17–37 (MVLATCLGSFILVIFYFQSML). Over 38–352 (HPVMRRNPFG…YSVPNYLKLD (315 aa)) the chain is Lumenal. 3'-phosphoadenylyl sulfate is bound by residues 124–130 (PKVACTN) and 186–194 (REPFERLVS). Residues N205, N223, N321, and N342 are each glycosylated (N-linked (GlcNAc...) asparagine).

It belongs to the sulfotransferase 2 family. N-glycosylated; required for activity and stability.

It localises to the golgi apparatus membrane. It carries out the reaction chondroitin beta-D-glucuronate + n 3'-phosphoadenylyl sulfate = chondroitin 4'-sulfate + n adenosine 3',5'-bisphosphate + n H(+). Functionally, catalyzes the transfer of sulfate to position 4 of the N-acetylgalactosamine (GalNAc) residue of chondroitin. Chondroitin sulfate constitutes the predominant proteoglycan present in cartilage and is distributed on the surfaces of many cells and extracellular matrices. Can also sulfate Gal residues in desulfated dermatan sulfate. Preferentially sulfates in GlcA-&gt;GalNAc unit than in IdoA-&gt;GalNAc unit. Does not form 4, 6-di-O-sulfated GalNAc when chondroitin sulfate C is used as an acceptor. The polypeptide is Carbohydrate sulfotransferase 11 (Chst11) (Rattus norvegicus (Rat)).